A 270-amino-acid polypeptide reads, in one-letter code: Formamidopyrimidine-DNA glycosylase (270 aa).

The active-site Schiff-base intermediate with DNA is the P2. E3 acts as the Proton donor in catalysis. K58 acts as the Proton donor; for beta-elimination activity in catalysis. DNA is bound by residues H91, R110, and R151. An FPG-type zinc finger spans residues 236–270 (FVYGRGGQPCKVCGTELREVKLGQRASVFCPKCQR). R260 serves as the catalytic Proton donor; for delta-elimination activity.

The protein belongs to the FPG family. In terms of assembly, monomer. The cofactor is Zn(2+).

The catalysed reaction is Hydrolysis of DNA containing ring-opened 7-methylguanine residues, releasing 2,6-diamino-4-hydroxy-5-(N-methyl)formamidopyrimidine.. It carries out the reaction 2'-deoxyribonucleotide-(2'-deoxyribose 5'-phosphate)-2'-deoxyribonucleotide-DNA = a 3'-end 2'-deoxyribonucleotide-(2,3-dehydro-2,3-deoxyribose 5'-phosphate)-DNA + a 5'-end 5'-phospho-2'-deoxyribonucleoside-DNA + H(+). Functionally, involved in base excision repair of DNA damaged by oxidation or by mutagenic agents. Acts as a DNA glycosylase that recognizes and removes damaged bases. Has a preference for oxidized purines, such as 7,8-dihydro-8-oxoguanine (8-oxoG). Has AP (apurinic/apyrimidinic) lyase activity and introduces nicks in the DNA strand. Cleaves the DNA backbone by beta-delta elimination to generate a single-strand break at the site of the removed base with both 3'- and 5'-phosphates. The chain is Formamidopyrimidine-DNA glycosylase from Pseudomonas entomophila (strain L48).